Consider the following 1362-residue polypeptide: Insulin receptor (1362 aa).

Residues 1–37 (MGQGVLRGEGHPNNNPNSKVGWKSLVGIITIFMLILC) form the signal peptide. The segment at 38-184 (DQSDGKICYS…DSVEDNYIEL (147 aa)) is leucine-rich region. A disulfide bond links cysteine 45 and cysteine 63. N-linked (GlcNAc...) asparagine glycosylation is found at asparagine 53, asparagine 115, and asparagine 148. Intrachain disulfides connect cysteine 163–cysteine 192, cysteine 196–cysteine 219, cysteine 206–cysteine 225, cysteine 229–cysteine 238, cysteine 233–cysteine 244, cysteine 245–cysteine 253, cysteine 249–cysteine 262, cysteine 265–cysteine 274, cysteine 278–cysteine 290, cysteine 296–cysteine 321, cysteine 303–cysteine 311, cysteine 325–cysteine 338, cysteine 341–cysteine 345, and cysteine 349–cysteine 370. The N-linked (GlcNAc...) asparagine glycan is linked to asparagine 332. N-linked (GlcNAc...) asparagine glycans are attached at residues asparagine 374, asparagine 434, and asparagine 455. An intrachain disulfide couples cysteine 472 to cysteine 505. Fibronectin type-III domains lie at 508–629 (NLLT…TNET) and 633–730 (VPLD…IQKE). 5 N-linked (GlcNAc...) asparagine glycosylation sites follow: asparagine 551, asparagine 627, asparagine 642, asparagine 660, and asparagine 707. 2 cysteine pairs are disulfide-bonded: cysteine 683–cysteine 896 and cysteine 822–cysteine 830. Residues 694–714 (WTPPTEIDENGNENQTEHTSV) are disordered. Residues 705–714 (NENQTEHTSV) show a composition bias toward polar residues. An insulin-binding region spans residues 741 to 749 (ENYLHNEVF). The Extracellular segment spans residues 759 to 951 (DLFGVANGTL…PDHPHSNIVK (193 aa)). N-linked (GlcNAc...) asparagine glycans are attached at residues asparagine 765 and asparagine 779. Positions 849-944 (VVGPITYEYV…EQAYFQVPDH (96 aa)) constitute a Fibronectin type-III 3 domain. N-linked (GlcNAc...) asparagine glycosylation is found at asparagine 917 and asparagine 930. Residues 952 to 972 (IITGPIIAVFLLLIVLVYCVV) form a helical membrane-spanning segment. Over 973–1362 (QKKKDAEGPA…ILSLPRSSPS (390 aa)) the chain is Cytoplasmic. Residue tyrosine 993 is modified to Phosphotyrosine; by autocatalysis. In terms of domain architecture, Protein kinase spans 1012-1287 (INLLRELGQG…MLKDDLRPSF (276 aa)). ATP-binding positions include serine 1022, lysine 1046, and 1093–1099 (ELMAHGD). The Proton donor/acceptor role is filled by aspartate 1148. ATP-binding positions include 1152–1153 (RN) and aspartate 1166. Phosphotyrosine; by autocatalysis is present on residues tyrosine 1174, tyrosine 1178, tyrosine 1179, tyrosine 1335, and tyrosine 1341.

It belongs to the protein kinase superfamily. Tyr protein kinase family. Insulin receptor subfamily. In terms of assembly, tetramer of 2 alpha and 2 beta chains linked by disulfide bonds. The alpha chains contribute to the formation of the ligand-binding domain, while the beta chains carry the kinase domain. In terms of processing, autophosphorylated on tyrosine residues in response to insulin. As to expression, localized mainly to the envelope in oocytes. Localized to the animal hemisphere during early embryonic cleavage. Expressed during organogenesis in regions of ecto- and mesodermic origins. Expressed in the entire encephalon, the otic and optic vesicles, the gills, the somites and the pronephric tubules of the embryo. Also found in adult liver, muscle and regenerated forelimbs.

The protein resides in the cell membrane. The enzyme catalyses L-tyrosyl-[protein] + ATP = O-phospho-L-tyrosyl-[protein] + ADP + H(+). Autophosphorylation activates the kinase activity. In terms of biological role, receptor tyrosine kinase which mediates actions of insulin. May be required for forelimb regeneration. This chain is Insulin receptor (insr), found in Xenopus laevis (African clawed frog).